The sequence spans 93 residues: Large ribosomal subunit protein bL31 (93 aa).

A disordered region spans residues 72–93 (VKTVSSNADNQKETTEELIKNK). A compositionally biased stretch (basic and acidic residues) spans 81–93 (NQKETTEELIKNK).

The protein belongs to the bacterial ribosomal protein bL31 family. Type A subfamily. Part of the 50S ribosomal subunit.

Binds the 23S rRNA. This chain is Large ribosomal subunit protein bL31, found in Onion yellows phytoplasma (strain OY-M).